Consider the following 224-residue polypeptide: MKMKVATAEAKKVNRKRQIESEKSNGKQSFISTIFASFKNTDASIVDIAPYKRLEQKTGILVDHRNNLQVYLKVKTTDLLSMNQDDLKRFMNQLTSLCRVYHEPFKILSLTYSTETTEQQVYWKRMALRFQGRMSQEVSEKKEEHLWYQRYSLAIENLNRVLWVEKNLKELAFFIVVYGKNETELIKNVKDMKRYGGRQFNLQNMKAKEVEKLIFKLQNMNSEM.

This is an uncharacterized protein from Bacillus anthracis.